A 414-amino-acid chain; its full sequence is Serine/threonine transporter SstT (414 aa).

Transmembrane regions (helical) follow at residues 19 to 39 (IIVGLVLGVVTALISPDLEPV), 55 to 75 (FVKGLRAVAPILIFVLVIAAI), 89 to 109 (IVMLYIIGTFGASIVAVLASF), 148 to 168 (ALATSNFIGILAWAIALGIAL), 189 to 209 (IVHLVISLAPFGIFGLVAATL), 223 to 243 (LLLVLLGSMLFMALVVNPFIV), 297 to 317 (IPLGATINMAGAAITVTVLTL), 323 to 343 (LGIPVSIPTAILLSVVSAVCA), and 363 to 383 (LFGISGDVAAQVIAVGFVIGV).

The protein belongs to the dicarboxylate/amino acid:cation symporter (DAACS) (TC 2.A.23) family.

The protein localises to the cell inner membrane. The catalysed reaction is L-serine(in) + Na(+)(in) = L-serine(out) + Na(+)(out). It carries out the reaction L-threonine(in) + Na(+)(in) = L-threonine(out) + Na(+)(out). In terms of biological role, involved in the import of serine and threonine into the cell, with the concomitant import of sodium (symport system). In Actinobacillus succinogenes (strain ATCC 55618 / DSM 22257 / CCUG 43843 / 130Z), this protein is Serine/threonine transporter SstT.